Consider the following 491-residue polypeptide: Glutamate--tRNA ligase (491 aa).

The 'HIGH' region signature appears at 13–23 (PSPTGFLHIGN). Residues cysteine 110, cysteine 112, cysteine 137, and histidine 139 each coordinate Zn(2+). The 'KMSKS' region signature appears at 254–258 (KLSKR). Lysine 257 contributes to the ATP binding site.

This sequence belongs to the class-I aminoacyl-tRNA synthetase family. Glutamate--tRNA ligase type 1 subfamily. Monomer. Zn(2+) is required as a cofactor.

The protein resides in the cytoplasm. It carries out the reaction tRNA(Glu) + L-glutamate + ATP = L-glutamyl-tRNA(Glu) + AMP + diphosphate. Catalyzes the attachment of glutamate to tRNA(Glu) in a two-step reaction: glutamate is first activated by ATP to form Glu-AMP and then transferred to the acceptor end of tRNA(Glu). In Listeria innocua serovar 6a (strain ATCC BAA-680 / CLIP 11262), this protein is Glutamate--tRNA ligase.